Here is a 72-residue protein sequence, read N- to C-terminus: LITAF domain-containing protein (72 aa).

An LITAF domain is found at 1–71 (MPVQAVCPYC…CQRELFYYHR (71 aa)). C7 and C10 together coordinate Zn(2+). The segment at 22–45 (PGALTWLLCTTLFLFGYVLGCCFL) is membrane-binding amphipathic helix. Residues C59 and C62 each coordinate Zn(2+).

Belongs to the CDIP1/LITAF family.

It localises to the membrane. In Homo sapiens (Human), this protein is LITAF domain-containing protein.